A 302-amino-acid chain; its full sequence is Acetylglutamate kinase (302 aa).

Residues 55–56, arginine 77, and asparagine 176 each bind substrate; that span reads GG.

This sequence belongs to the acetylglutamate kinase family. ArgB subfamily.

The protein localises to the cytoplasm. The catalysed reaction is N-acetyl-L-glutamate + ATP = N-acetyl-L-glutamyl 5-phosphate + ADP. It functions in the pathway amino-acid biosynthesis; L-arginine biosynthesis; N(2)-acetyl-L-ornithine from L-glutamate: step 2/4. Catalyzes the ATP-dependent phosphorylation of N-acetyl-L-glutamate. This Corynebacterium efficiens (strain DSM 44549 / YS-314 / AJ 12310 / JCM 11189 / NBRC 100395) protein is Acetylglutamate kinase.